The sequence spans 64 residues: Large ribosomal subunit protein uL30 (64 aa).

The protein belongs to the universal ribosomal protein uL30 family. Part of the 50S ribosomal subunit.

The protein is Large ribosomal subunit protein uL30 of Methylorubrum extorquens (strain CM4 / NCIMB 13688) (Methylobacterium extorquens).